The sequence spans 101 residues: Ubiquitin-related modifier 1 homolog (101 aa).

1-thioglycine is present on Gly-101. Gly-101 is covalently cross-linked (Glycyl lysine isopeptide (Gly-Lys) (interchain with K-? in acceptor proteins)).

It belongs to the URM1 family. Interacts with cer. In terms of processing, C-terminal thiocarboxylation occurs in 2 steps, it is first acyl-adenylated (-COAMP) via the hesA/moeB/thiF part of the MOCS3 homolog, then thiocarboxylated (-COSH) via the rhodanese domain of the MOCS3 homolog.

The protein localises to the cytoplasm. It functions in the pathway tRNA modification; 5-methoxycarbonylmethyl-2-thiouridine-tRNA biosynthesis. Acts as a sulfur carrier required for 2-thiolation of mcm(5)S(2)U at tRNA wobble positions of cytosolic tRNA(Lys), tRNA(Glu) and tRNA(Gln). Serves as sulfur donor in tRNA 2-thiolation reaction by being thiocarboxylated (-COSH) at its C-terminus by MOCS3. The sulfur is then transferred to tRNA to form 2-thiolation of mcm(5)S(2)U. Also acts as a ubiquitin-like protein (UBL) that is covalently conjugated via an isopeptide bond to lysine residues of target proteins such as Prx2/Jafrac1, Ciao1, Eip71CD and GILT1. The thiocarboxylated form serves as substrate for conjugation and oxidative stress specifically induces the formation of UBL-protein conjugates. The sequence is that of Ubiquitin-related modifier 1 homolog from Drosophila erecta (Fruit fly).